Reading from the N-terminus, the 476-residue chain is ATP synthase subunit beta (476 aa).

Residue 153 to 160 coordinates ATP; the sequence is GGAGVGKT.

Belongs to the ATPase alpha/beta chains family. In terms of assembly, F-type ATPases have 2 components, CF(1) - the catalytic core - and CF(0) - the membrane proton channel. CF(1) has five subunits: alpha(3), beta(3), gamma(1), delta(1), epsilon(1). CF(0) has three main subunits: a(1), b(2) and c(9-12). The alpha and beta chains form an alternating ring which encloses part of the gamma chain. CF(1) is attached to CF(0) by a central stalk formed by the gamma and epsilon chains, while a peripheral stalk is formed by the delta and b chains.

It is found in the cell membrane. It catalyses the reaction ATP + H2O + 4 H(+)(in) = ADP + phosphate + 5 H(+)(out). Functionally, produces ATP from ADP in the presence of a proton gradient across the membrane. The catalytic sites are hosted primarily by the beta subunits. This is ATP synthase subunit beta from Latilactobacillus sakei subsp. sakei (strain 23K) (Lactobacillus sakei subsp. sakei).